Reading from the N-terminus, the 234-residue chain is uncharacterized protein (234 aa).

3 consecutive transmembrane segments (helical) span residues 32 to 52 (GLRTNTLVAIGAALFVIVSVL), 62 to 82 (IPAQIVSGIGFLAGGVILKEG), and 106 to 126 (QGLFSEAVLGSMMVLVANIAL).

The protein belongs to the MgtC/SapB family.

It localises to the cell membrane. This is an uncharacterized protein from Synechocystis sp. (strain ATCC 27184 / PCC 6803 / Kazusa).